The chain runs to 316 residues: 4-hydroxy-3-methylbut-2-enyl diphosphate reductase (316 aa).

Cysteine 12 is a [4Fe-4S] cluster binding site. (2E)-4-hydroxy-3-methylbut-2-enyl diphosphate contacts are provided by histidine 43 and histidine 81. The dimethylallyl diphosphate site is built by histidine 43 and histidine 81. Isopentenyl diphosphate contacts are provided by histidine 43 and histidine 81. Cysteine 103 serves as a coordination point for [4Fe-4S] cluster. Residue histidine 131 coordinates (2E)-4-hydroxy-3-methylbut-2-enyl diphosphate. Histidine 131 contacts dimethylallyl diphosphate. Residue histidine 131 participates in isopentenyl diphosphate binding. The Proton donor role is filled by glutamate 133. Threonine 170 contacts (2E)-4-hydroxy-3-methylbut-2-enyl diphosphate. Position 198 (cysteine 198) interacts with [4Fe-4S] cluster. Residues serine 226, asparagine 228, and serine 271 each coordinate (2E)-4-hydroxy-3-methylbut-2-enyl diphosphate. Serine 226, asparagine 228, and serine 271 together coordinate dimethylallyl diphosphate. The isopentenyl diphosphate site is built by serine 226, asparagine 228, and serine 271.

It belongs to the IspH family. Requires [4Fe-4S] cluster as cofactor.

It carries out the reaction isopentenyl diphosphate + 2 oxidized [2Fe-2S]-[ferredoxin] + H2O = (2E)-4-hydroxy-3-methylbut-2-enyl diphosphate + 2 reduced [2Fe-2S]-[ferredoxin] + 2 H(+). It catalyses the reaction dimethylallyl diphosphate + 2 oxidized [2Fe-2S]-[ferredoxin] + H2O = (2E)-4-hydroxy-3-methylbut-2-enyl diphosphate + 2 reduced [2Fe-2S]-[ferredoxin] + 2 H(+). Its pathway is isoprenoid biosynthesis; dimethylallyl diphosphate biosynthesis; dimethylallyl diphosphate from (2E)-4-hydroxy-3-methylbutenyl diphosphate: step 1/1. It functions in the pathway isoprenoid biosynthesis; isopentenyl diphosphate biosynthesis via DXP pathway; isopentenyl diphosphate from 1-deoxy-D-xylulose 5-phosphate: step 6/6. In terms of biological role, catalyzes the conversion of 1-hydroxy-2-methyl-2-(E)-butenyl 4-diphosphate (HMBPP) into a mixture of isopentenyl diphosphate (IPP) and dimethylallyl diphosphate (DMAPP). Acts in the terminal step of the DOXP/MEP pathway for isoprenoid precursor biosynthesis. This chain is 4-hydroxy-3-methylbut-2-enyl diphosphate reductase, found in Bacillus cereus (strain AH820).